Here is a 309-residue protein sequence, read N- to C-terminus: Olfactory receptor-like protein OLF4 (309 aa).

Residues 1 to 25 (MELENDTRIPEFLLLGFSEEPKLQP) are Extracellular-facing. The N-linked (GlcNAc...) asparagine glycan is linked to Asn-5. A helical membrane pass occupies residues 26 to 49 (FLFGLFLSMYLVTILGNLLLILAV). Topologically, residues 50 to 57 (SSDSHLHT) are cytoplasmic. A helical membrane pass occupies residues 58–79 (PMYFFLANLSFVDICFTCTTIP). Topologically, residues 80 to 100 (KMLVNIQTQRKVITYESCIIQ) are extracellular. Residues 101–120 (MYFFELFAGIDNFLLTVMAY) traverse the membrane as a helical segment. Residues 121-139 (DRYMAICYPLHYMVIMNPQ) are Cytoplasmic-facing. Residues 140-158 (LCSLLLLVSWIMSALHSLL) form a helical membrane-spanning segment. The Extracellular portion of the chain corresponds to 159 to 196 (QTLMVLRLSFCTHFQIPHFFCELNQMIQLACSDTFLNN). Residues 197–219 (MMLYFAAILLGVAPLVGVLYSYF) form a helical membrane-spanning segment. Over 220-236 (KIVSSIRGISSAHSKYK) the chain is Cytoplasmic. A helical membrane pass occupies residues 237–260 (AFSTCASHLSVVSLFYCTSLGVYL). Residues 261–272 (SSAAPQSTHTSS) lie on the Extracellular side of the membrane. Residues 273 to 292 (VASVMYTVVTPMLNPFIYSL) traverse the membrane as a helical segment. Topologically, residues 293-309 (RNKDIKGALNVFFRGKP) are cytoplasmic.

The protein belongs to the G-protein coupled receptor 1 family.

Its subcellular location is the cell membrane. Its function is as follows. Putative odorant or sperm cell receptor. This is Olfactory receptor-like protein OLF4 from Canis lupus familiaris (Dog).